Here is a 621-residue protein sequence, read N- to C-terminus: 1-deoxy-D-xylulose-5-phosphate synthase (621 aa).

Thiamine diphosphate is bound by residues histidine 80 and 121-123 (GHS). Aspartate 152 is a binding site for Mg(2+). Thiamine diphosphate-binding positions include 153–154 (GA), asparagine 181, tyrosine 288, and glutamate 370. Asparagine 181 contacts Mg(2+).

It belongs to the transketolase family. DXPS subfamily. As to quaternary structure, homodimer. Mg(2+) is required as a cofactor. Thiamine diphosphate serves as cofactor.

It carries out the reaction D-glyceraldehyde 3-phosphate + pyruvate + H(+) = 1-deoxy-D-xylulose 5-phosphate + CO2. It participates in metabolic intermediate biosynthesis; 1-deoxy-D-xylulose 5-phosphate biosynthesis; 1-deoxy-D-xylulose 5-phosphate from D-glyceraldehyde 3-phosphate and pyruvate: step 1/1. Functionally, catalyzes the acyloin condensation reaction between C atoms 2 and 3 of pyruvate and glyceraldehyde 3-phosphate to yield 1-deoxy-D-xylulose-5-phosphate (DXP). In Vibrio vulnificus (strain CMCP6), this protein is 1-deoxy-D-xylulose-5-phosphate synthase.